The primary structure comprises 233 residues: Adenosine 5'-phosphosulfate reductase (233 aa).

C120, C121, C203, and C206 together coordinate [4Fe-4S] cluster. C229 serves as the catalytic Nucleophile; cysteine thiosulfonate intermediate.

It belongs to the PAPS reductase family. CysH subfamily. The cofactor is [4Fe-4S] cluster.

Its subcellular location is the cytoplasm. It catalyses the reaction [thioredoxin]-disulfide + sulfite + AMP + 2 H(+) = adenosine 5'-phosphosulfate + [thioredoxin]-dithiol. Its pathway is sulfur metabolism; hydrogen sulfide biosynthesis; sulfite from sulfate. In terms of biological role, catalyzes the formation of sulfite from adenosine 5'-phosphosulfate (APS) using thioredoxin as an electron donor. The polypeptide is Adenosine 5'-phosphosulfate reductase (Bacillus pumilus (strain SAFR-032)).